A 200-amino-acid chain; its full sequence is Ribonuclease HII (200 aa).

The region spanning 10–200 (LIEAGCDEAG…LGDGQLNLNF (191 aa)) is the RNase H type-2 domain. A divalent metal cation is bound by residues D16, E17, and D108.

This sequence belongs to the RNase HII family. Mn(2+) serves as cofactor. It depends on Mg(2+) as a cofactor.

Its subcellular location is the cytoplasm. It catalyses the reaction Endonucleolytic cleavage to 5'-phosphomonoester.. Its function is as follows. Endonuclease that specifically degrades the RNA of RNA-DNA hybrids. The protein is Ribonuclease HII of Bacteroides thetaiotaomicron (strain ATCC 29148 / DSM 2079 / JCM 5827 / CCUG 10774 / NCTC 10582 / VPI-5482 / E50).